The chain runs to 689 residues: MDAHELSFRDGHGSSTSTMKDECASEEKALYLPGDSSFASVFGPSETVEDVETGPESTQDKPHSFNTQKPIREKLAGKNVAPFLARHIPEQYAPLGSQTGQPVEISSANSKYCYRHRPDLKCRRQADEPTMDKLQRSDQQGIAHAWSIFSAAPAKHRKLILQGIMAQCCFPQLSFISATVRDLIRIDFLTALPPEISFKILCYLDTTSLCKAAQVSRRWRALADDDVVWHRMCEQHIHRKCKKCGWGLPLLDRKRLRESKREIERRAATWDVSEQPAETESNSATIDTAASGSKRKPESDKEDTAMVKRQCTSIVSQSEQNEDYFKTRYRPWKEVYKDRFKVGTNWKYGRCSIRVFKGHSNGIMCLQFEDNILATGSYDATIKIWDTETGEELRTLKGHRSGIRCLQFDDTKLISGSMDHTLKVWNWRTGECISTYSGHRGGVVGLHFDATILASGSVDKTVKIWNFEDKSTCLLRGHTDWVNAVRVDSASRTVFSASDDCTVKLWDLDTKSCIRTFHGHVGQVQQVVPLPREFEFEDHDVECENDNVSVTSGDSPAASPQAIPGFDAQTSDTPSSAFGPAFDDGRPSPPRYIVTSALDSTIRLWETSSGRCLRTFFGHLEGVWALAADTLRIVSGAEDRMVKIWDPRTGKCERTFTGHSGPVTCIGLGDSRFATGSEDCEVRMYSFQT.

2 stretches are compositionally biased toward basic and acidic residues: residues 1-12 (MDAHELSFRDGH) and 19-29 (MKDECASEEKA). The interval 1-66 (MDAHELSFRD…STQDKPHSFN (66 aa)) is disordered. The F-box domain occupies 186–232 (IDFLTALPPEISFKILCYLDTTSLCKAAQVSRRWRALADDDVVWHRM). The segment at 267 to 306 (AATWDVSEQPAETESNSATIDTAASGSKRKPESDKEDTAM) is disordered. A compositionally biased stretch (polar residues) spans 276-291 (PAETESNSATIDTAAS). Residues 295-306 (RKPESDKEDTAM) show a composition bias toward basic and acidic residues. 7 WD repeats span residues 358–395 (GHSN…ELRT), 398–437 (GHRS…STYS), 439–475 (HRGG…TCLL), 477–518 (GHTD…RTFH), 572–615 (DTPS…CLRT), 616–655 (FFGH…CERT), and 658–689 (GHSG…SFQT).

This sequence belongs to the WD repeat MET30/SCONB/SCON-2 family. Component of the SCF(sconB) E3 ubiquitin ligase complex.

It participates in protein modification; protein ubiquitination. Component of the SCF(sconB) E3 ubiquitin ligase complex involved in the regulation of sulfur metabolite repression, probably by mediating the inactivation or degradation of the metR transcription factor. The polypeptide is Probable E3 ubiquitin ligase complex SCF subunit sconB (sconB) (Neosartorya fischeri (strain ATCC 1020 / DSM 3700 / CBS 544.65 / FGSC A1164 / JCM 1740 / NRRL 181 / WB 181) (Aspergillus fischerianus)).